The primary structure comprises 474 residues: Probable aspartate--tRNA ligase, cytoplasmic (474 aa).

E203 provides a ligand contact to L-aspartate. Residues 225–228 form an aspartate region; it reads QLYK. An L-aspartate-binding site is contributed by R247. Residues 247–249, 255–257, and E397 contribute to the ATP site; these read RAE and RYL. L-aspartate is bound by residues S400 and R404. 445–448 lines the ATP pocket; that stretch reads GLER.

This sequence belongs to the class-II aminoacyl-tRNA synthetase family. Type 2 subfamily. In terms of assembly, homodimer.

It localises to the cytoplasm. It carries out the reaction tRNA(Asp) + L-aspartate + ATP = L-aspartyl-tRNA(Asp) + AMP + diphosphate. This chain is Probable aspartate--tRNA ligase, cytoplasmic, found in Enterocytozoon bieneusi (strain H348) (Microsporidian parasite).